Here is a 319-residue protein sequence, read N- to C-terminus: NADH-ubiquinone oxidoreductase chain 1 (319 aa).

The next 8 helical transmembrane spans lie at 3–23, 74–94, 106–126, 149–169, 175–195, 226–246, 254–274, and 294–314; these read LITLIINPLMYIIPILLAMAF, LFLLTPTLALTLALILWIPLP, ILFILAVSSLSVYSILGSGWA, TLGLIIISLIMFTGGFTLTTF, AVWLILPAWPLAAMWFISTLA, LFFLAEYTNILLMNALSTILF, LTINLNWAIKTMILASMFLWV, and FLPLTLALITWHISLPISMAG.

This sequence belongs to the complex I subunit 1 family.

The protein resides in the mitochondrion inner membrane. The enzyme catalyses a ubiquinone + NADH + 5 H(+)(in) = a ubiquinol + NAD(+) + 4 H(+)(out). Functionally, core subunit of the mitochondrial membrane respiratory chain NADH dehydrogenase (Complex I) that is believed to belong to the minimal assembly required for catalysis. Complex I functions in the transfer of electrons from NADH to the respiratory chain. The immediate electron acceptor for the enzyme is believed to be ubiquinone. The polypeptide is NADH-ubiquinone oxidoreductase chain 1 (MT-ND1) (Polypterus ornatipinnis (Ornate bichir)).